We begin with the raw amino-acid sequence, 86 residues long: Long neurotoxin homolog (86 aa).

Residues 1-21 form the signal peptide; sequence MKTLLLTLVVVTIVCLALGYT. 5 disulfides stabilise this stretch: Cys24/Cys45, Cys27/Cys32, Cys38/Cys63, Cys67/Cys78, and Cys79/Cys84.

The protein belongs to the three-finger toxin family. Ancestral subfamily. Orphan group II sub-subfamily. Expressed by the venom gland.

The protein resides in the secreted. Its function is as follows. Binds with low affinity and weakly inhibits muscle nicotinic acetylcholine receptor (nAChR). In Naja atra (Chinese cobra), this protein is Long neurotoxin homolog.